The following is a 156-amino-acid chain: Small ribosomal subunit protein uS7 (156 aa).

Belongs to the universal ribosomal protein uS7 family. As to quaternary structure, part of the 30S ribosomal subunit. Contacts proteins S9 and S11.

One of the primary rRNA binding proteins, it binds directly to 16S rRNA where it nucleates assembly of the head domain of the 30S subunit. Is located at the subunit interface close to the decoding center, probably blocks exit of the E-site tRNA. The sequence is that of Small ribosomal subunit protein uS7 from Lactobacillus acidophilus (strain ATCC 700396 / NCK56 / N2 / NCFM).